The primary structure comprises 529 residues: Tyrosine-protein kinase Fgr (529 aa).

Gly2 carries N-myristoyl glycine lipidation. S-palmitoyl cysteine attachment occurs at residues Cys3 and Cys6. Tyr34 is modified (phosphotyrosine). An SH3 domain is found at 77–138 (IGVTLFIALY…PSNYVAPVDS (62 aa)). Residues 144–241 (WYFGKIGRKD…GLCNLLIAPC (98 aa)) form the SH2 domain. A Phosphotyrosine modification is found at Tyr208. Ser218 carries the post-translational modification Phosphoserine. The Protein kinase domain maps to 263-516 (ITLERRLGTG…YLQSFLEDYF (254 aa)). Residues 269 to 277 (LGTGCFGDV) and Lys291 each bind ATP. Residue Asp382 is the Proton acceptor of the active site. Phosphotyrosine is present on Tyr412. A Phosphotyrosine; by SRC modification is found at Tyr523.

Belongs to the protein kinase superfamily. Tyr protein kinase family. SRC subfamily. As to quaternary structure, interacts with ITGB1, ITGB2, MS4A2/FCER1B, FCER1G, FCGR2A and/or FCGR2B. Interacts (via SH2 domain) with SYK (tyrosine phosphorylated). Interacts (via SH2 domain) with FLT3 (tyrosine phosphorylated). Interacts with PTK2/FAK1. Interacts (via SH2 domain) with HCLS1 (tyrosine phosphorylated by SYK). Interacts with SIRPA and PTPNS1. Interacts (not phosphorylated on tyrosine residues) with CBL; FGR tyrosine phosphorylation promotes dissociation. Interacts with PIK3R1 and FASLG. Interacts with CLNK. Ubiquitinated. Becomes ubiquitinated in response to ITGB2 signaling; this does not lead to degradation. In terms of processing, phosphorylated. Autophosphorylated on tyrosine residues. Becomes phosphorylated in response to FCGR2A and/or FCGR2B engagement, cell adhesion and signaling by ITGB2. Prior phosphorylation at Tyr-523 by SRC inhibits ulterior autophosphorylation at Tyr-412. Detected in neutrophils, monocytes and natural killer cells (at protein level). Detected in monocytes and large lymphocytes.

Its subcellular location is the cell membrane. It localises to the cell projection. The protein localises to the ruffle membrane. The protein resides in the cytoplasm. It is found in the cytosol. Its subcellular location is the cytoskeleton. It localises to the mitochondrion inner membrane. The protein localises to the mitochondrion intermembrane space. It carries out the reaction L-tyrosyl-[protein] + ATP = O-phospho-L-tyrosyl-[protein] + ADP + H(+). Its activity is regulated as follows. Activated by autophosphorylation. Prior phosphorylation at Tyr-523 by SRC inhibits ulterior autophosphorylation at Tyr-412. Activated by phorbol myristate acetate, phosphatidic acid and poly-Lys. Binding (via SH2 domain) of HCLS1 that is already phosphorylated by SYK strongly increases kinase activity. Functionally, non-receptor tyrosine-protein kinase that transmits signals from cell surface receptors devoid of kinase activity and contributes to the regulation of immune responses, including neutrophil, monocyte, macrophage and mast cell functions, cytoskeleton remodeling in response to extracellular stimuli, phagocytosis, cell adhesion and migration. Promotes mast cell degranulation, release of inflammatory cytokines and IgE-mediated anaphylaxis. Acts downstream of receptors that bind the Fc region of immunoglobulins, such as MS4A2/FCER1B, FCGR2A and/or FCGR2B. Acts downstream of ITGB1 and ITGB2, and regulates actin cytoskeleton reorganization, cell spreading and adhesion. Depending on the context, activates or inhibits cellular responses. Functions as a negative regulator of ITGB2 signaling, phagocytosis and SYK activity in monocytes. Required for normal ITGB1 and ITGB2 signaling, normal cell spreading and adhesion in neutrophils and macrophages. Functions as a positive regulator of cell migration and regulates cytoskeleton reorganization via RAC1 activation. Phosphorylates SYK (in vitro) and promotes SYK-dependent activation of AKT1 and MAP kinase signaling. Phosphorylates PLD2 in antigen-stimulated mast cells, leading to PLD2 activation and the production of the signaling molecules lysophosphatidic acid and diacylglycerol. Promotes activation of PIK3R1. Phosphorylates FASLG, and thereby regulates its ubiquitination and subsequent internalization. Phosphorylates ABL1. Promotes phosphorylation of CBL, CTTN, PIK3R1, PTK2/FAK1, PTK2B/PYK2 and VAV2. Phosphorylates HCLS1 that has already been phosphorylated by SYK, but not unphosphorylated HCLS1. Together with CLNK, it acts as a negative regulator of natural killer cell-activating receptors and inhibits interferon-gamma production. The polypeptide is Tyrosine-protein kinase Fgr (FGR) (Homo sapiens (Human)).